The primary structure comprises 316 residues: Serpentine receptor class delta-48 (316 aa).

Helical transmembrane passes span 8 to 28 (FFYI…IFVI), 42 to 62 (FLLC…LLQL), 89 to 109 (LFYV…FITI), 127 to 147 (VVII…QIDL), 185 to 205 (FLLT…GFFI), 236 to 256 (TLQS…YFVV), and 269 to 289 (ILPV…LYSV).

It belongs to the nematode receptor-like protein srd family.

It is found in the membrane. The sequence is that of Serpentine receptor class delta-48 (srd-48) from Caenorhabditis elegans.